A 109-amino-acid polypeptide reads, in one-letter code: C-X-C motif chemokine 13 (109 aa).

Residues 1-22 (MKFISTSLLLMLLVSSLSPVQG) form the signal peptide. 2 cysteine pairs are disulfide-bonded: C33–C60 and C35–C76.

It belongs to the intercrine alpha (chemokine CxC) family. Highest levels in liver, followed by spleen, lymph node, appendix and stomach. Low levels in salivary gland, mammary gland and fetal spleen.

The protein localises to the secreted. Functionally, chemotactic for B-lymphocytes but not for T-lymphocytes, monocytes and neutrophils. Does not induce calcium release in B-lymphocytes. Binds to BLR1/CXCR5. The polypeptide is C-X-C motif chemokine 13 (CXCL13) (Homo sapiens (Human)).